The primary structure comprises 543 residues: Glucose-6-phosphate isomerase (543 aa).

Glutamate 351 acts as the Proton donor in catalysis. Catalysis depends on residues histidine 382 and lysine 511.

Belongs to the GPI family.

It localises to the cytoplasm. It catalyses the reaction alpha-D-glucose 6-phosphate = beta-D-fructose 6-phosphate. The protein operates within carbohydrate biosynthesis; gluconeogenesis. It participates in carbohydrate degradation; glycolysis; D-glyceraldehyde 3-phosphate and glycerone phosphate from D-glucose: step 2/4. Its function is as follows. Catalyzes the reversible isomerization of glucose-6-phosphate to fructose-6-phosphate. The protein is Glucose-6-phosphate isomerase of Hydrogenovibrio crunogenus (strain DSM 25203 / XCL-2) (Thiomicrospira crunogena).